Consider the following 161-residue polypeptide: Small ribosomal subunit protein eS6 (161 aa).

A disordered region spans residues valine 119 to glutamate 161. Acidic residues predominate over residues glycine 122–glutamate 161.

Belongs to the eukaryotic ribosomal protein eS6 family.

The chain is Small ribosomal subunit protein eS6 from Haloquadratum walsbyi (strain DSM 16790 / HBSQ001).